We begin with the raw amino-acid sequence, 285 residues long: Troponin T, cardiac muscle (285 aa).

Residues 1–58 are compositionally biased toward acidic residues; sequence MSDVEEAVEEYEEQEEAAEEEHEEAVEEEAGGEAEAGEPCTAEDGEEEEGREAEDGPV. 2 disordered regions span residues 1-83 and 111-206; these read MSDV…GERV and RKKE…EKKK. Ser-2 bears the N-acetylserine mark. At Ser-2 the chain carries Phosphoserine; by CK2. Pro residues predominate over residues 66–77; it reads RPFMPNLVPPKI. Basic and acidic residues-rich tracts occupy residues 111–171 and 190–206; these read RKKE…DEAR and QTERKSGKRQTEREKKK. Phosphothreonine; by PKC/PRKCA is present on Thr-191. Ser-195 is modified (phosphoserine; by PKC/PRKCA). Thr-200 carries the phosphothreonine; by PKC/PRKCA and RAF1 modification. Thr-281 is modified (phosphothreonine; by PKC/PRKCA).

The protein belongs to the troponin T family. Post-translationally, the N-terminus is blocked. In terms of processing, phosphorylation at Thr-200 by PRKCA induces significant reduction in myofilament calcium sensitivity and actomyosin ATPase activity.

Functionally, troponin T is the tropomyosin-binding subunit of troponin, the thin filament regulatory complex which confers calcium-sensitivity to striated muscle actomyosin ATPase activity. This chain is Troponin T, cardiac muscle (TNNT2), found in Bos taurus (Bovine).